Consider the following 295-residue polypeptide: Porphobilinogen deaminase (295 aa).

An S-(dipyrrolylmethanemethyl)cysteine modification is found at Cys241.

This sequence belongs to the HMBS family. As to quaternary structure, monomer. Dipyrromethane is required as a cofactor.

It catalyses the reaction 4 porphobilinogen + H2O = hydroxymethylbilane + 4 NH4(+). Its pathway is porphyrin-containing compound metabolism; protoporphyrin-IX biosynthesis; coproporphyrinogen-III from 5-aminolevulinate: step 2/4. Tetrapolymerization of the monopyrrole PBG into the hydroxymethylbilane pre-uroporphyrinogen in several discrete steps. This is Porphobilinogen deaminase from Lachnospira eligens (strain ATCC 27750 / DSM 3376 / VPI C15-48 / C15-B4) (Eubacterium eligens).